The following is a 655-amino-acid chain: DNA mismatch repair protein MutL (655 aa).

2 disordered regions span residues 357–416 and 439–460; these read EKKQ…DDYT and DFDS…SKDP. A compositionally biased stretch (basic and acidic residues) spans 371 to 383; sequence SHEEDEKNDDKAY. A compositionally biased stretch (polar residues) spans 402 to 416; the sequence is NTSVSTSPNSDDDYT.

It belongs to the DNA mismatch repair MutL/HexB family.

This protein is involved in the repair of mismatches in DNA. It is required for dam-dependent methyl-directed DNA mismatch repair. May act as a 'molecular matchmaker', a protein that promotes the formation of a stable complex between two or more DNA-binding proteins in an ATP-dependent manner without itself being part of a final effector complex. In Staphylococcus saprophyticus subsp. saprophyticus (strain ATCC 15305 / DSM 20229 / NCIMB 8711 / NCTC 7292 / S-41), this protein is DNA mismatch repair protein MutL.